A 566-amino-acid chain; its full sequence is Bicarbonate transporter BicA (566 aa).

Residues 1-15 (MQITNKIHFRNIRGD) lie on the Cytoplasmic side of the membrane. The chain crosses the membrane as a helical span at residues 16–36 (IFGGLTAAVIALPMALAFGVA). Residues 37–42 (SGAGAE) are Periplasmic-facing. A helical transmembrane segment spans residues 43–63 (AGLWGAVLVGFFAALFGGTPT). A topological domain (cytoplasmic) is located at residue Leu-64. A helical membrane pass occupies residues 65–85 (ISEPTGPMTVVMTAVIAHFTA). Thr-69 provides a ligand contact to hydrogencarbonate. Residues 86–93 (SAATPEEG) lie on the Periplasmic side of the membrane. A helical membrane pass occupies residues 94 to 114 (LAIAFTVVMMAGVFQIIFGSL). The Cytoplasmic segment spans residues 115–126 (KLGKYVTMMPYT). Residues 127 to 147 (VISGFMSGIGIILVILQLAPF) form a helical membrane-spanning segment. Residues 148 to 169 (LGQASPGGGVIGTLQNLPTLLS) are Periplasmic-facing. Residues 170 to 190 (NIQPGETALALGTVAIIWFMP) traverse the membrane as a helical segment. Over 191-196 (EKFKKV) the chain is Cytoplasmic. The helical transmembrane segment at 197-217 (IPPQLVALVLGTVIAFFVFPP) threads the bilayer. At 218–247 (EVSDLRRIGEIRAGFPELVRPSFSPVEFQR) the chain is on the periplasmic side. Residues 248 to 268 (MILDAAVLGMLGCIDALLTSV) form a helical membrane-spanning segment. Residues Asp-262, Thr-266, and Gly-304 each contribute to the Na(+) site. Over 269-318 (VADSLTRTEHNSNKELIGQGLGNLFSGLFGGIAGAGATMGTVVNIQSGGR) the chain is Cytoplasmic. Ala-305 serves as a coordination point for hydrogencarbonate. Na(+) is bound at residue Thr-306. The chain crosses the membrane as a helical span at residues 319 to 339 (TALSGLVRAFVLLVVILGAAS). Leu-340 is a topological domain (periplasmic). Residues 341–361 (TATIPLAVLAGIAFKVGVDII) form a helical membrane-spanning segment. Residues 362–371 (DWSFLKRAHE) lie on the Cytoplasmic side of the membrane. A helical membrane pass occupies residues 372–392 (ISPKGALIMYGVILLTVLVDL). Position 393 (Ile-393) is a topological domain, periplasmic. A helical membrane pass occupies residues 394–414 (VAVGVGVFVANVLTIERMSNL). Over 415 to 566 (QSEKVQTVSD…GVTAPSSEMG (152 aa)) the chain is Cytoplasmic. Residues 436–546 (KRWLDEGQGR…MSREEALKNA (111 aa)) form the STAS domain.

Belongs to the SLC26A/SulP transporter (TC 2.A.53) family.

It is found in the cell inner membrane. Low/medium affinity, Na(+)-dependent bicarbonate transporter. The sequence is that of Bicarbonate transporter BicA (bicA) from Picosynechococcus sp. (strain ATCC 27264 / PCC 7002 / PR-6) (Agmenellum quadruplicatum).